The chain runs to 810 residues: DNA-binding protein REB1 (810 aa).

Basic and acidic residues-rich tracts occupy residues 1–10 (MPSGHNDKNA) and 29–44 (HQNH…LENK). 5 disordered regions span residues 1-80 (MPSG…ENIS), 114-161 (NQQD…GVDD), 180-243 (NNNN…TNND), 294-313 (HGLN…LSNS), and 346-365 (QDTQ…AGSV). 2 stretches are compositionally biased toward low complexity: residues 51–64 (IVES…NNND) and 124–135 (NNNTDNGNDSNN). A compositionally biased stretch (basic and acidic residues) spans 149–161 (DKNKKDAGVGVDD). A compositionally biased stretch (low complexity) spans 180 to 191 (NNNNNNSIANDS). Residues 198-208 (HDNGNNHENSQ) show a composition bias toward basic and acidic residues. A compositionally biased stretch (polar residues) spans 346–355 (QDTQPHQQKS). S355 is subject to Phosphoserine. The HTH myb-type domain occupies 470-523 (HIFEQRGKWTAEEEQELAKLCAEKEGQWAEIGKTLGRMPEDCRDRWRNYVKCGT). Positions 497 to 519 (WAEIGKTLGRMPEDCRDRWRNYV) form a DNA-binding region, H-T-H motif. The disordered stretch occupies residues 572-667 (QNDHRNNDED…STHSKSLSNT (96 aa)). Over residues 586–606 (ASAAAAAAAAIQEQQQLLQQK) the composition is skewed to low complexity. Positions 627–636 (DNKDEDKPHD) are enriched in basic and acidic residues. Polar residues predominate over residues 643–667 (DDNSQNSMVPAPSATSTHSKSLSNT). Residues 692–717 (NWTIVSERMGGTRSRIQCRYKWNKLV) form the Myb-like domain. A Glycyl lysine isopeptide (Lys-Gly) (interchain with G-Cter in SUMO) cross-link involves residue K807.

It localises to the nucleus. DNA-binding protein that recognizes sites within both the enhancer and the promoter of rRNA transcription, as well as upstream of many genes transcribed by RNA polymerase II. It is essential for cell growth. May stimulate or inhibit transcription. Specifically recognizes the sequence 5'-CCGGGTA-3' or 5'-CGGGTRR-3' (where R is any purine). A member of the general regulatory factors (GRFs) which act as genome partitioners. Acts as a chromatin insulator which are known as STARs (Subtelomeric anti-silencing region). STARs prevent negative or positive transcription influence by extending across chromatin to a promoter. This Saccharomyces cerevisiae (strain ATCC 204508 / S288c) (Baker's yeast) protein is DNA-binding protein REB1 (REB1).